Here is a 173-residue protein sequence, read N- to C-terminus: MDIKEAGPFPVKKEQFRMTVNGQAWEVAAVPTTHLSDLLRKEFQLTGTKVSCGIGRCGACSILIDGKLANACMTMAYQADGHSITTIEGLQKEELDMCQTAFLEEGGFQCGYCTPGMIIALKALFRETPQPSDKDIEEGLAGNLCRCTGYGGIMRSACRIRRELNGGRRESGF.

Residues 14-90 form the 2Fe-2S ferredoxin-type domain; it reads EQFRMTVNGQ…GHSITTIEGL (77 aa). Residues C52, C57, C60, C72, C110, C113, C145, and C147 each coordinate [2Fe-2S] cluster.

As to quaternary structure, could be composed of four subunits: PucA, PucC, PucD and PucE. [2Fe-2S] cluster is required as a cofactor.

It carries out the reaction xanthine + NAD(+) + H2O = urate + NADH + H(+). The catalysed reaction is hypoxanthine + NAD(+) + H2O = xanthine + NADH + H(+). It participates in purine metabolism; hypoxanthine degradation; urate from hypoxanthine: step 1/2. The protein operates within purine metabolism; hypoxanthine degradation; urate from hypoxanthine: step 2/2. Oxidizes hypoxanthine and xanthine to uric acid. This Bacillus subtilis (strain 168) protein is Probable xanthine dehydrogenase subunit E (pucE).